We begin with the raw amino-acid sequence, 622 residues long: 3-(3-hydroxy-phenyl)propionate/3-hydroxycinnamic acid hydroxylase (622 aa).

FAD is bound by residues 20–49 (DVAI…VLEK) and 288–298 (FRVDRVLLAGD).

Belongs to the PheA/TfdB FAD monooxygenase family. It depends on FAD as a cofactor.

It catalyses the reaction 3-(3-hydroxyphenyl)propanoate + NADH + O2 + H(+) = 3-(2,3-dihydroxyphenyl)propanoate + NAD(+) + H2O. It carries out the reaction (2E)-3-(3-hydroxyphenyl)prop-2-enoate + NADH + O2 + H(+) = (2E)-3-(2,3-dihydroxyphenyl)prop-2-enoate + NAD(+) + H2O. Its pathway is aromatic compound metabolism; 3-phenylpropanoate degradation. Its function is as follows. Catalyzes the insertion of one atom of molecular oxygen into position 2 of the phenyl ring of 3-(3-hydroxyphenyl)propionate (3-HPP) and hydroxycinnamic acid (3HCI). The sequence is that of 3-(3-hydroxy-phenyl)propionate/3-hydroxycinnamic acid hydroxylase from Paraburkholderia xenovorans (strain LB400).